The sequence spans 116 residues: Dolichyl-diphosphooligosaccharide--protein glycosyltransferase subunit DAD1 (116 aa).

Residues 1–32 (MAKSSATKDAQALFHSLRSAYAATPTNLKIID) are Cytoplasmic-facing. The helical transmembrane segment at 33–53 (LYVIFAISTALIQVVYMAIVG) threads the bilayer. Topologically, residues 54-56 (SFP) are lumenal. A helical membrane pass occupies residues 57–77 (FNSFLSGVLSCIGTAVLAVCL). The Cytoplasmic portion of the chain corresponds to 78–95 (RIQVNKENKEFKDLPPER). The helical transmembrane segment at 96 to 116 (AFADFVLCNLVLHLVIMNFLG) threads the bilayer.

The protein belongs to the DAD/OST2 family. Component of the oligosaccharyltransferase (OST) complex.

It is found in the endoplasmic reticulum membrane. It participates in protein modification; protein glycosylation. Its function is as follows. Subunit of the oligosaccharyl transferase (OST) complex that catalyzes the initial transfer of a defined glycan (Glc(3)Man(9)GlcNAc(2) in eukaryotes) from the lipid carrier dolichol-pyrophosphate to an asparagine residue within an Asn-X-Ser/Thr consensus motif in nascent polypeptide chains, the first step in protein N-glycosylation. N-glycosylation occurs cotranslationally and the complex associates with the Sec61 complex at the channel-forming translocon complex that mediates protein translocation across the endoplasmic reticulum (ER). All subunits are required for a maximal enzyme activity. This Solanum lycopersicum (Tomato) protein is Dolichyl-diphosphooligosaccharide--protein glycosyltransferase subunit DAD1 (DAD1).